A 486-amino-acid polypeptide reads, in one-letter code: Probable transporter MCH1 (486 aa).

A run of 12 helical transmembrane segments spans residues 31–51 (IFAL…FSMY), 68–88 (SVSI…GYLG), 95–115 (YLAL…SGIF), 135–155 (EMAL…YASL), 174–194 (TYTP…SSLW), 211–231 (VAGI…IIFF), 268–288 (FFTD…GGPF), 312–333 (FSTH…VGFS), 349–369 (VIAL…FTVF), 377–397 (VVTI…PTIV), 409–429 (IWGS…LLFA), and 457–477 (FVIT…IWVF).

It belongs to the major facilitator superfamily.

It is found in the vacuole membrane. Probable transporter. This chain is Probable transporter MCH1 (MCH1), found in Yarrowia lipolytica (strain CLIB 122 / E 150) (Yeast).